Here is a 217-residue protein sequence, read N- to C-terminus: ATP phosphoribosyltransferase (217 aa).

The protein belongs to the ATP phosphoribosyltransferase family. Short subfamily. Heteromultimer composed of HisG and HisZ subunits.

It is found in the cytoplasm. It carries out the reaction 1-(5-phospho-beta-D-ribosyl)-ATP + diphosphate = 5-phospho-alpha-D-ribose 1-diphosphate + ATP. It functions in the pathway amino-acid biosynthesis; L-histidine biosynthesis; L-histidine from 5-phospho-alpha-D-ribose 1-diphosphate: step 1/9. Functionally, catalyzes the condensation of ATP and 5-phosphoribose 1-diphosphate to form N'-(5'-phosphoribosyl)-ATP (PR-ATP). Has a crucial role in the pathway because the rate of histidine biosynthesis seems to be controlled primarily by regulation of HisG enzymatic activity. The chain is ATP phosphoribosyltransferase (hisG) from Neisseria meningitidis serogroup A / serotype 4A (strain DSM 15465 / Z2491).